Reading from the N-terminus, the 265-residue chain is Glutamate racemase (265 aa).

Residues 9–10 (DS) and 41–42 (YS) each bind substrate. Cys-73 functions as the Proton donor/acceptor in the catalytic mechanism. 74 to 75 (NT) lines the substrate pocket. Cys-184 acts as the Proton donor/acceptor in catalysis. Position 185–186 (185–186 (TH)) interacts with substrate.

It belongs to the aspartate/glutamate racemases family.

It catalyses the reaction L-glutamate = D-glutamate. It participates in cell wall biogenesis; peptidoglycan biosynthesis. Functionally, provides the (R)-glutamate required for cell wall biosynthesis. The protein is Glutamate racemase of Actinobacillus pleuropneumoniae serotype 5b (strain L20).